A 416-amino-acid chain; its full sequence is Imidazolonepropionase (416 aa).

Residues H81 and H83 each contribute to the Fe(3+) site. Residues H81 and H83 each contribute to the Zn(2+) site. The 4-imidazolone-5-propanoate site is built by R90, Y153, and H186. Residue Y153 participates in N-formimidoyl-L-glutamate binding. H251 contributes to the Fe(3+) binding site. H251 contributes to the Zn(2+) binding site. Residue Q254 participates in 4-imidazolone-5-propanoate binding. D326 contacts Fe(3+). Residue D326 participates in Zn(2+) binding. Residues N328 and G330 each coordinate N-formimidoyl-L-glutamate. T331 is a 4-imidazolone-5-propanoate binding site.

Belongs to the metallo-dependent hydrolases superfamily. HutI family. Zn(2+) is required as a cofactor. The cofactor is Fe(3+).

Its subcellular location is the cytoplasm. It catalyses the reaction 4-imidazolone-5-propanoate + H2O = N-formimidoyl-L-glutamate. It participates in amino-acid degradation; L-histidine degradation into L-glutamate; N-formimidoyl-L-glutamate from L-histidine: step 3/3. In terms of biological role, catalyzes the hydrolytic cleavage of the carbon-nitrogen bond in imidazolone-5-propanoate to yield N-formimidoyl-L-glutamate. It is the third step in the universal histidine degradation pathway. The sequence is that of Imidazolonepropionase from Paracidovorax citrulli (strain AAC00-1) (Acidovorax citrulli).